Here is a 188-residue protein sequence, read N- to C-terminus: Cell division protein SepF (188 aa).

The protein belongs to the SepF family. Homodimer. Interacts with FtsZ.

It localises to the cytoplasm. Its function is as follows. Cell division protein that is part of the divisome complex and is recruited early to the Z-ring. Probably stimulates Z-ring formation, perhaps through the cross-linking of FtsZ protofilaments. Its function overlaps with FtsA. This chain is Cell division protein SepF, found in Synechococcus sp. (strain CC9605).